We begin with the raw amino-acid sequence, 299 residues long: Oxygen-dependent coproporphyrinogen-III oxidase (299 aa).

Ser92 is a binding site for substrate. 2 residues coordinate Mn(2+): His96 and His106. The active-site Proton donor is His106. Asn108 to Arg110 is a binding site for substrate. Residues His145 and His175 each coordinate Mn(2+). The tract at residues Tyr240 to Glu275 is important for dimerization. Gly258–Arg260 is a binding site for substrate.

This sequence belongs to the aerobic coproporphyrinogen-III oxidase family. Homodimer. Mn(2+) serves as cofactor.

It is found in the cytoplasm. It carries out the reaction coproporphyrinogen III + O2 + 2 H(+) = protoporphyrinogen IX + 2 CO2 + 2 H2O. It participates in porphyrin-containing compound metabolism; protoporphyrin-IX biosynthesis; protoporphyrinogen-IX from coproporphyrinogen-III (O2 route): step 1/1. Functionally, involved in the heme biosynthesis. Catalyzes the aerobic oxidative decarboxylation of propionate groups of rings A and B of coproporphyrinogen-III to yield the vinyl groups in protoporphyrinogen-IX. The chain is Oxygen-dependent coproporphyrinogen-III oxidase from Escherichia coli O157:H7.